Reading from the N-terminus, the 301-residue chain is Ribosomal RNA small subunit methyltransferase H (301 aa).

Residues 35 to 37 (GGH), D55, F84, D105, and Q112 contribute to the S-adenosyl-L-methionine site.

This sequence belongs to the methyltransferase superfamily. RsmH family.

It localises to the cytoplasm. It catalyses the reaction cytidine(1402) in 16S rRNA + S-adenosyl-L-methionine = N(4)-methylcytidine(1402) in 16S rRNA + S-adenosyl-L-homocysteine + H(+). Specifically methylates the N4 position of cytidine in position 1402 (C1402) of 16S rRNA. The chain is Ribosomal RNA small subunit methyltransferase H from Chloroflexus aurantiacus (strain ATCC 29366 / DSM 635 / J-10-fl).